The sequence spans 950 residues: Protocadherin alpha-6 (950 aa).

The N-terminal stretch at 1-29 (MVFTPEDRLGKQCLLLPLLLLAAWKVGSG) is a signal peptide. Residues 30 to 697 (QLHYSVPEEA…GPEAALVDVN (668 aa)) lie on the Extracellular side of the membrane. Cadherin domains follow at residues 34–133 (SVPE…PPLF), 157–242 (ASDA…APNF), 243–350 (EQSE…VPEI), 351–455 (ALTS…APAF), 456–565 (AQPE…APAL), and 581–678 (VPRS…APKA). N-linked (GlcNAc...) asparagine glycans are attached at residues Asn-257, Asn-265, Asn-386, and Asn-548. The helical transmembrane segment at 698–718 (VYLIIAICAVSSLLVLTLLLY) threads the bilayer. Residues 719–950 (TALRCSAPST…GNSTTDNSDQ (232 aa)) are Cytoplasmic-facing. PXXP repeat units lie at residues 799 to 802 (PRQP), 832 to 835 (PGGP), 873 to 876 (PGNP), and 891 to 894 (PGSP). The interval 799-894 (PRQPNPDWRY…PDKFIIPGSP (96 aa)) is 4 X 4 AA repeats of P-X-X-P. A disordered region spans residues 830-889 (AGPGGPDQQWPTVSSATPEPEAGEVSPPVGAGVNSNSWTFKYGPGNPKQSGPGELPDKFI). A disordered region spans residues 901–950 (QEPANSQIDKSDFITFGKKEETKKKKKKKKGNKTQEKKEKGNSTTDNSDQ). Residues 909 to 923 (DKSDFITFGKKEETK) are compositionally biased toward basic and acidic residues.

It localises to the cell membrane. In terms of biological role, potential calcium-dependent cell-adhesion protein. May be involved in the establishment and maintenance of specific neuronal connections in the brain. This Pan troglodytes (Chimpanzee) protein is Protocadherin alpha-6 (PCDHA6).